Reading from the N-terminus, the 37-residue chain is Cytochrome b6-f complex subunit 5 (37 aa).

The helical transmembrane segment at 5-25 (LPSGIVLGLIPITLAGLFVTA) threads the bilayer.

It belongs to the PetG family. The 4 large subunits of the cytochrome b6-f complex are cytochrome b6, subunit IV (17 kDa polypeptide, PetD), cytochrome f and the Rieske protein, while the 4 small subunits are PetG, PetL, PetM and PetN. The complex functions as a dimer.

It localises to the plastid. Its subcellular location is the chloroplast thylakoid membrane. In terms of biological role, component of the cytochrome b6-f complex, which mediates electron transfer between photosystem II (PSII) and photosystem I (PSI), cyclic electron flow around PSI, and state transitions. PetG is required for either the stability or assembly of the cytochrome b6-f complex. The chain is Cytochrome b6-f complex subunit 5 from Pinus thunbergii (Japanese black pine).